Reading from the N-terminus, the 158-residue chain is Ankyrin repeat domain-containing protein 37 (158 aa).

3 ANK repeats span residues 1-25 (MLLL…SVNA), 30-59 (CEQS…DLNQ), and 63-92 (FGEA…QIDL). A Nuclear localization signal motif is present at residues 129–149 (EQPNKDHCVQVLRLKRSFGSE).

Post-translationally, ubiquitinated by the CRL2(FEM1B) complex, leading to its degradation.

The protein localises to the nucleus. It localises to the cytoplasm. The protein is Ankyrin repeat domain-containing protein 37 (ANKRD37) of Bos taurus (Bovine).